A 718-amino-acid chain; its full sequence is MLFSLRRLKKLANLEAFSDQKVIDSLINLGFEVDQITKLNEISGIKFGQILEIRKNPEADNLWICKVQFADKIREIQTAAKNVIENKQVLAFIPGSKSGNTTFLAKKLRGHISEGMLISAVELGFNKHLLNSELDQGVLVFDPIFDLESNPLKVLELDDLILDIKLLWNRPDGNSYLVLANELAAFFKTDFSLINKEISGKFYSELKIINKTDSKIFALEIQKLPKLALVDIFLLLKSEVKIGNLAQNFSNFILIYTGQPSYCLQLEKHQQKVELIEQKVKIKYEPDTISSYHFLNQEKKPLLIPEFSDQIIMENNSFFLIMPKFNLLKVKQIKQFLKKNSLKLTQLGKNYNYGTTFIALSFLNFFLEDQKIDFSWPINFDKSLISKKTFLDLNYNELKEILGLELSQEDISKTNLILEKIGYNFDNTSFSPPFYRVDIEFFADYAADFLRFYGLEKLKDCKLEQVKSKIPNPDLEPVKLKTLGYYETNSFLLISKEEDFNPLELKSQDLLTFPSQEHTKIRYSLAWQLAKITKYNQKRKITEINLYEKGSIAGWNHSLALASTIYTSEDLKKHLKILYNYDFDFLPADSEFLNPEKSQFIYLDNVLVGWLGQVAEKYNYENVNFLEILLSKVEKIPKKEGGKIKFRPYDNSQLKYRDITLSLPMKDIPDPYLKVIQKIPEIFSVKLINYVIINNQQKITYRITGPDQVCAEIDKFYK.

Positions 39–153 constitute a tRNA-binding domain; sequence LNEISGIKFG…IFDLESNPLK (115 aa). The B5 domain maps to 386–460; it reads SKKTFLDLNY…RFYGLEKLKD (75 aa). Residues aspartate 438, aspartate 444, and aspartate 448 each coordinate Mg(2+).

Belongs to the phenylalanyl-tRNA synthetase beta subunit family. Type 1 subfamily. Tetramer of two alpha and two beta subunits. Requires Mg(2+) as cofactor.

Its subcellular location is the cytoplasm. The enzyme catalyses tRNA(Phe) + L-phenylalanine + ATP = L-phenylalanyl-tRNA(Phe) + AMP + diphosphate + H(+). The polypeptide is Phenylalanine--tRNA ligase beta subunit (Mesomycoplasma hyopneumoniae (strain 232) (Mycoplasma hyopneumoniae)).